An 842-amino-acid chain; its full sequence is Glycogen phosphorylase, muscle form (842 aa).

At Ser-2 the chain carries N-acetylserine. At Ser-15 the chain carries Phosphoserine; by PHK; in form phosphorylase A. The AMP site is built by Asp-43 and Tyr-76. Residues Tyr-204 and Tyr-227 each carry the phosphotyrosine modification. Residue 310 to 319 participates in AMP binding; that stretch reads RRFKSSKFGC. Ser-430 is subject to Phosphoserine. Tyr-473 bears the Phosphotyrosine mark. N6-(pyridoxal phosphate)lysine is present on Lys-681. Phosphoserine occurs at positions 747 and 748.

Belongs to the glycogen phosphorylase family. As to quaternary structure, homodimer. Homotetramer; to form the enzymatically active phosphorylase A. Pyridoxal 5'-phosphate is required as a cofactor. Phosphorylation of Ser-15 converts phosphorylase B (unphosphorylated) to phosphorylase A.

It catalyses the reaction [(1-&gt;4)-alpha-D-glucosyl](n) + phosphate = [(1-&gt;4)-alpha-D-glucosyl](n-1) + alpha-D-glucose 1-phosphate. Allosterically regulated through the non-covalent binding of metabolites, being activated by AMP and inhibited by ATP, ADP, and glucose-6-phosphate. The activity is also controlled by post-translational modifications including phosphorylation. In terms of biological role, allosteric enzyme that catalyzes the rate-limiting step in glycogen catabolism, the phosphorolytic cleavage of glycogen to produce glucose-1-phosphate, and plays a central role in maintaining cellular and organismal glucose homeostasis. This is Glycogen phosphorylase, muscle form from Ovis aries (Sheep).